Reading from the N-terminus, the 900-residue chain is DNA mismatch repair protein MutS (900 aa).

Residues 1 to 88 (MPGPSDDPTE…PAWAHHSQVD (88 aa)) form a disordered region. Residues 56–68 (APADHNAADHDSN) show a composition bias toward basic and acidic residues. 714–721 (GPNASGKS) lines the ATP pocket.

The protein belongs to the DNA mismatch repair MutS family.

In terms of biological role, this protein is involved in the repair of mismatches in DNA. It is possible that it carries out the mismatch recognition step. This protein has a weak ATPase activity. This is DNA mismatch repair protein MutS from Parasynechococcus marenigrum (strain WH8102).